A 395-amino-acid polypeptide reads, in one-letter code: 8-amino-7-oxononanoate synthase (395 aa).

Arg24 provides a ligand contact to substrate. Pyridoxal 5'-phosphate is bound at residue 111–112 (GF). His136 serves as a coordination point for substrate. Residues Ser184, 209–212 (DDAH), and 240–243 (TLSK) each bind pyridoxal 5'-phosphate. Residue Lys243 is modified to N6-(pyridoxal phosphate)lysine. A substrate-binding site is contributed by Thr357.

Belongs to the class-II pyridoxal-phosphate-dependent aminotransferase family. BioF subfamily. In terms of assembly, homodimer. The cofactor is pyridoxal 5'-phosphate.

It catalyses the reaction 6-carboxyhexanoyl-[ACP] + L-alanine + H(+) = (8S)-8-amino-7-oxononanoate + holo-[ACP] + CO2. It participates in cofactor biosynthesis; biotin biosynthesis. Catalyzes the decarboxylative condensation of pimeloyl-[acyl-carrier protein] and L-alanine to produce 8-amino-7-oxononanoate (AON), [acyl-carrier protein], and carbon dioxide. The polypeptide is 8-amino-7-oxononanoate synthase (Alkaliphilus oremlandii (strain OhILAs) (Clostridium oremlandii (strain OhILAs))).